The chain runs to 344 residues: Phenylalanine--tRNA ligase alpha subunit (344 aa).

Residue Glu-256 coordinates Mg(2+).

This sequence belongs to the class-II aminoacyl-tRNA synthetase family. Phe-tRNA synthetase alpha subunit type 1 subfamily. Tetramer of two alpha and two beta subunits. The cofactor is Mg(2+).

Its subcellular location is the cytoplasm. The catalysed reaction is tRNA(Phe) + L-phenylalanine + ATP = L-phenylalanyl-tRNA(Phe) + AMP + diphosphate + H(+). The sequence is that of Phenylalanine--tRNA ligase alpha subunit from Bacillus anthracis (strain CDC 684 / NRRL 3495).